A 194-amino-acid polypeptide reads, in one-letter code: Phosphoheptose isomerase (194 aa).

The 156-residue stretch at I31 to A186 folds into the SIS domain. N46 to G48 is a binding site for substrate. Zn(2+) is bound by residues H55 and E59. Substrate contacts are provided by residues E59, N88 to D89, S114 to S116, S119, and Q166. Zn(2+) contacts are provided by Q166 and H174.

Belongs to the SIS family. GmhA subfamily. The cofactor is Zn(2+).

The protein localises to the cytoplasm. The catalysed reaction is 2 D-sedoheptulose 7-phosphate = D-glycero-alpha-D-manno-heptose 7-phosphate + D-glycero-beta-D-manno-heptose 7-phosphate. It participates in carbohydrate biosynthesis; D-glycero-D-manno-heptose 7-phosphate biosynthesis; D-glycero-alpha-D-manno-heptose 7-phosphate and D-glycero-beta-D-manno-heptose 7-phosphate from sedoheptulose 7-phosphate: step 1/1. Catalyzes the isomerization of sedoheptulose 7-phosphate in D-glycero-D-manno-heptose 7-phosphate. This chain is Phosphoheptose isomerase, found in Synechocystis sp. (strain ATCC 27184 / PCC 6803 / Kazusa).